The sequence spans 304 residues: Glycine--tRNA ligase alpha subunit (304 aa).

The protein belongs to the class-II aminoacyl-tRNA synthetase family. Tetramer of two alpha and two beta subunits.

The protein localises to the cytoplasm. The catalysed reaction is tRNA(Gly) + glycine + ATP = glycyl-tRNA(Gly) + AMP + diphosphate. In Streptococcus agalactiae serotype Ia (strain ATCC 27591 / A909 / CDC SS700), this protein is Glycine--tRNA ligase alpha subunit.